Consider the following 210-residue polypeptide: Vacuolar protein sorting-associated protein 28 homolog 2 (210 aa).

In terms of domain architecture, VPS28 N-terminal spans 1 to 99 (MMEVKLWNDK…VTSGLPATVE (99 aa)). One can recognise a VPS28 C-terminal domain in the interval 109-205 (SNSASIVAEC…SSYNSFMAAL (97 aa)).

It belongs to the VPS28 family. In terms of assembly, component of the endosomal sorting required for transport complex I (ESCRT-I), composed of ELC, VPS28 and VPS37. Interacts with ELC.

The protein resides in the endosome. Functionally, component of the ESCRT-I complex (endosomal sorting complex required for transport I), a regulator of vesicular trafficking process. Required for the sorting of endocytic ubiquitinated cargos into multivesicular bodies (MVBs). Mediates the association to the ESCRT-0 complex. This Arabidopsis thaliana (Mouse-ear cress) protein is Vacuolar protein sorting-associated protein 28 homolog 2 (VPS28-2).